Reading from the N-terminus, the 438-residue chain is Glutamyl-tRNA(Gln) amidotransferase subunit D (438 aa).

The Asparaginase/glutaminase domain maps to 92–422 (PTITILGTGG…REAKKMMLTN (331 aa)). Catalysis depends on residues T102, T178, D179, and K256.

Belongs to the asparaginase 1 family. GatD subfamily. Heterodimer of GatD and GatE.

It catalyses the reaction L-glutamyl-tRNA(Gln) + L-glutamine + ATP + H2O = L-glutaminyl-tRNA(Gln) + L-glutamate + ADP + phosphate + H(+). In terms of biological role, allows the formation of correctly charged Gln-tRNA(Gln) through the transamidation of misacylated Glu-tRNA(Gln) in organisms which lack glutaminyl-tRNA synthetase. The reaction takes place in the presence of glutamine and ATP through an activated gamma-phospho-Glu-tRNA(Gln). The GatDE system is specific for glutamate and does not act on aspartate. The chain is Glutamyl-tRNA(Gln) amidotransferase subunit D from Pyrococcus furiosus (strain ATCC 43587 / DSM 3638 / JCM 8422 / Vc1).